The primary structure comprises 410 residues: Voltage-dependent chloride channel 2, chloroplastic (410 aa).

Over 1–110 (MYQSMNLSFS…RHVSSSPSSR (110 aa)) the chain is Lumenal, thylakoid. Residues 111 to 131 (VILSLIPPVFFFTTVAILIAG) traverse the membrane as a helical segment. Over 132–147 (YNSAVDLDWLPDFFPV) the chain is Stromal. The helical transmembrane segment at 148 to 168 (LRASPLPYQLTAPALALLLVF) threads the bilayer. Residues 169-315 (RTEASYSRFE…PLSYTRLTSR (147 aa)) lie on the Lumenal, thylakoid side of the membrane. 2 helical membrane-spanning segments follow: residues 316 to 336 (FLVLWHLTLPVILWDDCHWNV) and 337 to 357 (VPATFISAASLFCIEEVGVLI). Topologically, residues 358-410 (EEPFSMLALDELCAMVLSNSDEAVESKEVIRNRIIAKKRILEIKHSSNGWHKS) are lumenal, thylakoid.

This sequence belongs to the anion channel-forming bestrophin (TC 1.A.46) family. Voltage-dependent chloride channel subfamily. Mostly expressed in flowers and, to a lower extent, in leaves, stems and roots.

Its subcellular location is the plastid. The protein localises to the chloroplast thylakoid membrane. It carries out the reaction chloride(in) = chloride(out). Its function is as follows. Voltage-dependent chloride (Cl) channel probably contributing to proton motive force (PMF) partitioning across the thylakoid membrane by anion influx into the lumen. Influences thylakoid ultrastructure, including lumen size and organization. The sequence is that of Voltage-dependent chloride channel 2, chloroplastic from Arabidopsis thaliana (Mouse-ear cress).